The sequence spans 469 residues: 2-amino-4-ketopentanoate thiolase beta subunit (469 aa).

Position 102 is an N6-(pyridoxal phosphate)lysine (Lys-102). Pyridoxal 5'-phosphate contacts are provided by residues Asn-128 and 238–242 (AGGGN).

It belongs to the threonine synthase family. Heterodimer with OrtA. Pyridoxal 5'-phosphate is required as a cofactor.

It catalyses the reaction D-alanine + acetyl-CoA = (2R)-2-amino-4-oxopentanoate + CoA. Its activity is regulated as follows. Completely inhibited by p-chloromercuribenzoate (p-ClHgBzO) and acetyl-CoA, and partially inhibited by N-ethylmaleimide. In terms of biological role, involved in the ornithine fermentation pathway. Catalyzes the thiolytic cleavage of 2-amino-4-ketopentanoate (AKP) with coenzyme A (CoA) to form acetyl-CoA and alanine. It is strictly specific for AKP. The chain is 2-amino-4-ketopentanoate thiolase beta subunit from Acetoanaerobium sticklandii (strain ATCC 12662 / DSM 519 / JCM 1433 / CCUG 9281 / NCIMB 10654 / HF) (Clostridium sticklandii).